The primary structure comprises 479 residues: Poly(A) polymerase catalytic subunit (479 aa).

Residues D202 and D204 contribute to the active site. Ca(2+) contacts are provided by D202, D204, and D253.

Belongs to the poxviridae poly(A) polymerase catalytic subunit family. As to quaternary structure, heterodimer of a large (catalytic) subunit and a small (regulatory) subunit.

The catalysed reaction is RNA(n) + ATP = RNA(n)-3'-adenine ribonucleotide + diphosphate. Its function is as follows. Polymerase that creates the 3'-poly(A) tail of mRNA's. This chain is Poly(A) polymerase catalytic subunit (OPG063), found in Homo sapiens (Human).